The chain runs to 236 residues: Phosphoribosylaminoimidazole-succinocarboxamide synthase (236 aa).

This sequence belongs to the SAICAR synthetase family.

It carries out the reaction 5-amino-1-(5-phospho-D-ribosyl)imidazole-4-carboxylate + L-aspartate + ATP = (2S)-2-[5-amino-1-(5-phospho-beta-D-ribosyl)imidazole-4-carboxamido]succinate + ADP + phosphate + 2 H(+). It participates in purine metabolism; IMP biosynthesis via de novo pathway; 5-amino-1-(5-phospho-D-ribosyl)imidazole-4-carboxamide from 5-amino-1-(5-phospho-D-ribosyl)imidazole-4-carboxylate: step 1/2. The chain is Phosphoribosylaminoimidazole-succinocarboxamide synthase from Wolinella succinogenes (strain ATCC 29543 / DSM 1740 / CCUG 13145 / JCM 31913 / LMG 7466 / NCTC 11488 / FDC 602W) (Vibrio succinogenes).